The primary structure comprises 758 residues: 5-methyltetrahydropteroyltriglutamate--homocysteine methyltransferase (758 aa).

Residues 16–19 (RELK) and lysine 116 contribute to the 5-methyltetrahydropteroyltri-L-glutamate site. Residues 436–438 (IGS) and glutamate 489 each bind L-homocysteine. L-methionine contacts are provided by residues 436-438 (IGS) and glutamate 489. 5-methyltetrahydropteroyltri-L-glutamate is bound by residues 520 to 521 (RC) and tryptophan 566. L-homocysteine is bound at residue aspartate 604. Aspartate 604 is a binding site for L-methionine. Glutamate 610 serves as a coordination point for 5-methyltetrahydropteroyltri-L-glutamate. Positions 646, 648, and 670 each coordinate Zn(2+). Histidine 699 serves as the catalytic Proton donor. Cysteine 731 contributes to the Zn(2+) binding site.

The protein belongs to the vitamin-B12 independent methionine synthase family. It depends on Zn(2+) as a cofactor.

It catalyses the reaction 5-methyltetrahydropteroyltri-L-glutamate + L-homocysteine = tetrahydropteroyltri-L-glutamate + L-methionine. Its pathway is amino-acid biosynthesis; L-methionine biosynthesis via de novo pathway; L-methionine from L-homocysteine (MetE route): step 1/1. Functionally, catalyzes the transfer of a methyl group from 5-methyltetrahydrofolate to homocysteine resulting in methionine formation. The sequence is that of 5-methyltetrahydropteroyltriglutamate--homocysteine methyltransferase from Xylella fastidiosa (strain M12).